The following is a 357-amino-acid chain: Aspartate-semialdehyde dehydrogenase (357 aa).

8 residues coordinate NADP(+): Thr-12, Gly-13, Thr-14, Val-15, Ser-37, Ser-40, Leu-84, and Asp-85. Residue Cys-151 is the Acyl-thioester intermediate of the active site. Gly-183 is an NADP(+) binding site. His-247 (proton acceptor) is an active-site residue. Ser-323 is subject to Phosphoserine. Asn-335 provides a ligand contact to NADP(+).

The protein belongs to the aspartate-semialdehyde dehydrogenase family.

It is found in the cytoplasm. It localises to the cytosol. Its subcellular location is the nucleus. The catalysed reaction is L-aspartate 4-semialdehyde + phosphate + NADP(+) = 4-phospho-L-aspartate + NADPH + H(+). It participates in amino-acid biosynthesis; L-methionine biosynthesis via de novo pathway; L-homoserine from L-aspartate: step 2/3. The protein operates within amino-acid biosynthesis; L-threonine biosynthesis; L-threonine from L-aspartate: step 2/5. Its function is as follows. Catalyzes the NADPH-dependent formation of L-aspartate 4-semialdehyde (L-ASA) by the reductive dephosphorylation of 4-phospho-L-aspartate. Mediates the second step in the biosynthesis of amino acids that derive from aspartate (the aspartate family of amino acids), including methioinine and threonine, the latter of which is a precursor to isoleucine. The chain is Aspartate-semialdehyde dehydrogenase from Schizosaccharomyces pombe (strain 972 / ATCC 24843) (Fission yeast).